A 125-amino-acid polypeptide reads, in one-letter code: Small ribosomal subunit protein uS13 (125 aa).

The tract at residues 97 to 125 (PVRGQKTRSNARTRKGPRPSRIKTKKKSS) is disordered. Over residues 101-125 (QKTRSNARTRKGPRPSRIKTKKKSS) the composition is skewed to basic residues.

This sequence belongs to the universal ribosomal protein uS13 family. In terms of assembly, part of the 30S ribosomal subunit. Forms a loose heterodimer with protein S19. Forms two bridges to the 50S subunit in the 70S ribosome.

Functionally, located at the top of the head of the 30S subunit, it contacts several helices of the 16S rRNA. In the 70S ribosome it contacts the 23S rRNA (bridge B1a) and protein L5 of the 50S subunit (bridge B1b), connecting the 2 subunits; these bridges are implicated in subunit movement. Contacts the tRNAs in the A and P-sites. This is Small ribosomal subunit protein uS13 from Thermotoga maritima (strain ATCC 43589 / DSM 3109 / JCM 10099 / NBRC 100826 / MSB8).